The primary structure comprises 281 residues: Lectin alpha chain (281 aa).

N-linked (GlcNAc...) asparagine glycosylation is found at asparagine 35, asparagine 82, and asparagine 140.

Belongs to the leguminous lectin family. Tetramer of 2 alpha and 2 beta chains. In terms of processing, glycosylated. The beta chain is produced by partial proteolytic processing of the alpha chain.

Its function is as follows. D-galactose-binding lectin. The chain is Lectin alpha chain from Lablab purpureus (Hyacinth bean).